Here is a 65-residue protein sequence, read N- to C-terminus: Trypsin inhibitor (65 aa).

As to quaternary structure, homotrimer.

This chain is Trypsin inhibitor, found in Zea mays (Maize).